Here is a 1088-residue protein sequence, read N- to C-terminus: Insulin receptor substrate 1-B (1088 aa).

The 103-residue stretch at aspartate 15–asparagine 117 folds into the PH domain. Tyrosine 48 carries the post-translational modification Phosphotyrosine. The region spanning phenylalanine 155–phenylalanine 259 is the IRS-type PTB domain. Positions phenylalanine 259–glycine 428 are disordered. Composition is skewed to low complexity over residues lysine 264 to proline 278, serine 302 to alanine 312, serine 379 to serine 400, and serine 408 to glycine 420. At serine 307 the chain carries Phosphoserine. Position 460 is a phosphotyrosine; by INSR (tyrosine 460). The YXXM motif 1 signature appears at tyrosine 460–methionine 463. Composition is skewed to polar residues over residues serine 466–glutamine 479 and serine 499–serine 516. Disordered regions lie at residues serine 466–glutamate 485 and arginine 496–serine 516. 5 consecutive short sequence motifs (YXXM motif) follow at residues tyrosine 521 to methionine 524, tyrosine 567 to methionine 570, tyrosine 584 to methionine 587, tyrosine 612 to methionine 615, and tyrosine 654 to methionine 657. Residues tyrosine 567 and tyrosine 584 each carry the phosphotyrosine; by INSR modification. Residue tyrosine 612 is modified to Phosphotyrosine. The tract at residues asparagine 704 to tyrosine 785 is disordered. Over residues isoleucine 707 to glutamate 718 the composition is skewed to polar residues. Residues aspartate 719–serine 729 show a composition bias toward low complexity. Tyrosine 785 and tyrosine 823 each carry phosphotyrosine; by INSR. The segment at tyrosine 785 to asparagine 787 is GRB2-binding. A YXXM motif 7 motif is present at residues tyrosine 823–methionine 826. The segment covering threonine 840–arginine 863 has biased composition (polar residues). The segment at threonine 840 to glycine 868 is disordered. Tyrosine 875 bears the Phosphotyrosine; by INSR mark. 2 consecutive short sequence motifs (YXXM motif) follow at residues tyrosine 875–methionine 878 and tyrosine 909–methionine 912. The segment at alanine 935–serine 1006 is disordered. 2 stretches are compositionally biased toward polar residues: residues glycine 946–proline 961 and glutamate 980–proline 995. Tyrosine 1037 and tyrosine 1069 each carry phosphotyrosine; by INSR.

Interacts with the NPXY motif of tyrosine-phosphorylated igf1r and insr via the PTB domain. Binds to phosphatidylinositol 3-kinase p85 subunit at a low level in vitro prior to phosphorylation. Binding is greatly enhanced following tyrosine phosphorylation by insr and probably occurs via the phosphorylated YXXM motifs. Phosphorylation of Tyr-785 is required for grb2-binding.

May mediate the control of various cellular processes by insulin. When phosphorylated by the insulin receptor binds specifically to various cellular proteins containing SH2 domains such as phosphatidylinositol 3-kinase p85 subunit or grb2. Activates phosphatidylinositol 3-kinase when bound to the regulatory p85 subunit. This Xenopus laevis (African clawed frog) protein is Insulin receptor substrate 1-B (irs1-b).